The sequence spans 434 residues: ATP-sensitive inward rectifier potassium channel 14 (434 aa).

Topologically, residues Met-1–Asp-81 are cytoplasmic. Position 79 is an S-nitrosocysteine (Cys-79). Residues Val-82–Leu-108 traverse the membrane as a helical segment. Residues Ile-109–Ser-131 are Extracellular-facing. The segment at residues Phe-132–Tyr-148 is an intramembrane region (helical; Pore-forming). A Selectivity filter motif is present at residues Ser-145–Val-150. Residues Gly-149–Cys-157 lie on the Extracellular side of the membrane. The helical transmembrane segment at Pro-158–Lys-185 threads the bilayer. Topologically, residues Met-186–Pro-434 are cytoplasmic. A disordered region spans residues Gln-398–Pro-434. The segment covering Lys-407–Glu-416 has biased composition (basic and acidic residues). The span at Ala-418–Pro-434 shows a compositional bias: low complexity.

This sequence belongs to the inward rectifier-type potassium channel (TC 1.A.2.1) family. KCNJ14 subfamily.

The protein resides in the membrane. It catalyses the reaction K(+)(in) = K(+)(out). With respect to regulation, channel activity is regulated by variations of cytosolic pH; channels are activated by alkaline and inhibited by acidic pH values. Inhibited by Ba(2+) and Cs(+) in a voltage-dependent manner; sensitivity to those inhibitors is lower than in other Kir channels. In terms of biological role, inward rectifier potassium channels are characterized by a greater tendency to allow potassium to flow into the cell rather than out of it. Their voltage dependence is regulated by the concentration of extracellular potassium; as external potassium is raised, the voltage range of the channel opening shifts to more positive voltages. This chain is ATP-sensitive inward rectifier potassium channel 14 (Kcnj14), found in Mus musculus (Mouse).